Consider the following 329-residue polypeptide: Sulfate-binding protein (329 aa).

The first 19 residues, 1–19 (MKKWGVGFTLLLASTSILA), serve as a signal peptide directing secretion.

The protein belongs to the prokaryotic sulfate-binding protein family.

It localises to the periplasm. Functionally, this protein specifically binds sulfate and is involved in its transmembrane transport. This chain is Sulfate-binding protein (sbp), found in Salmonella typhimurium (strain LT2 / SGSC1412 / ATCC 700720).